The chain runs to 893 residues: cGMP-specific 3',5'-cyclic phosphodiesterase (893 aa).

2 GAF domains span residues 21–173 (DIDV…GIGI) and 205–390 (NLEC…GLGI). In terms of domain architecture, PDEase spans 420 to 743 (GQDQTEKLIQ…RNWQDLAEKV (324 aa)). His-496 (proton donor) is an active-site residue. His-500, His-536, Asp-537, and Asp-647 together coordinate a divalent metal cation. Disordered regions lie at residues 784 to 807 (QQSQ…RLSI) and 844 to 893 (HVSE…CALL). Composition is skewed to basic and acidic residues over residues 789 to 800 (GGDDSHTPEHQR) and 844 to 853 (HVSEDMDDKS). Low complexity predominate over residues 864–880 (SVGRMSASSSTSSAGTV). Over residues 883-893 (SKKRSKLCALL) the composition is skewed to basic residues. The residue at position 890 (Cys-890) is a Cysteine methyl ester. Cys-890 is lipidated: S-farnesyl cysteine. A propeptide spans 891 to 893 (ALL) (removed in mature form).

The protein belongs to the cyclic nucleotide phosphodiesterase family. In terms of assembly, interacts with PrBP. A divalent metal cation serves as cofactor.

Its subcellular location is the cell membrane. The catalysed reaction is 3',5'-cyclic GMP + H2O = GMP + H(+). In terms of biological role, has a role regulating cGMP transport in Malpighian tubule principal cells. The polypeptide is cGMP-specific 3',5'-cyclic phosphodiesterase (Drosophila virilis (Fruit fly)).